The following is a 246-amino-acid chain: Protein crossbronx (246 aa).

In terms of domain architecture, UBC core spans 20-177 (QQEYKILAEY…VQESILESKA (158 aa)).

This sequence belongs to the ubiquitin-conjugating enzyme family. FTS subfamily.

The protein is Protein crossbronx (cbx) of Drosophila grimshawi (Hawaiian fruit fly).